A 92-amino-acid polypeptide reads, in one-letter code: Large ribosomal subunit protein eL43 (92 aa).

The C4-type zinc-finger motif lies at 39–60 (CSFCGKKAVKRGAAGIWNCSSC).

Belongs to the eukaryotic ribosomal protein eL43 family.

The protein is Large ribosomal subunit protein eL43 (RPL43) of Eremothecium gossypii (strain ATCC 10895 / CBS 109.51 / FGSC 9923 / NRRL Y-1056) (Yeast).